The following is a 135-amino-acid chain: Ribosome-binding factor A (135 aa).

Belongs to the RbfA family. As to quaternary structure, monomer. Binds 30S ribosomal subunits, but not 50S ribosomal subunits or 70S ribosomes.

The protein localises to the cytoplasm. Its function is as follows. One of several proteins that assist in the late maturation steps of the functional core of the 30S ribosomal subunit. Associates with free 30S ribosomal subunits (but not with 30S subunits that are part of 70S ribosomes or polysomes). Required for efficient processing of 16S rRNA. May interact with the 5'-terminal helix region of 16S rRNA. The polypeptide is Ribosome-binding factor A (Aliivibrio salmonicida (strain LFI1238) (Vibrio salmonicida (strain LFI1238))).